Consider the following 136-residue polypeptide: Peptide methionine sulfoxide reductase B5 (136 aa).

The 122-residue stretch at 14-135 (DEEWRAVLSP…NSVSIKFTPA (122 aa)) folds into the MsrB domain. Residues Cys-53, Cys-56, Cys-99, and Cys-102 each contribute to the Zn(2+) site. An intrachain disulfide couples Cys-71 to Cys-124. The Nucleophile role is filled by Cys-124.

It belongs to the MsrB Met sulfoxide reductase family. It depends on Zn(2+) as a cofactor.

The protein resides in the cytoplasm. The protein localises to the cytosol. It catalyses the reaction L-methionyl-[protein] + [thioredoxin]-disulfide + H2O = L-methionyl-(R)-S-oxide-[protein] + [thioredoxin]-dithiol. Catalyzes the reduction of methionine sulfoxide (MetSO) to methionine in proteins. Plays a protective role against oxidative stress by restoring activity to proteins that have been inactivated by methionine oxidation. MSRB family specifically reduces the MetSO R-enantiomer. The protein is Peptide methionine sulfoxide reductase B5 (MSRB5) of Oryza sativa subsp. japonica (Rice).